A 261-amino-acid chain; its full sequence is Probable membrane transporter protein ORF9 (261 aa).

Transmembrane regions (helical) follow at residues 8 to 28 (LLAFLFVAAFIAGFIDSIAGG), 29 to 49 (GGMITIPAMLIAGIPPLQTLG), 78 to 98 (LPMALMSAAGAVLGALLATIV), 100 to 120 (GDVLKAILPFLLIAIALYFGL), 133 to 151 (VTPFVFTLTLVPLIGFYDG), 152 to 171 (VFGPGTGSFFMLGFVTLAGF), 189 to 209 (VGAFGVFLFFGAVLWKVGLLM), and 231 to 251 (IIKPLLVIVSIALAIRLLADP).

This sequence belongs to the 4-toluene sulfonate uptake permease (TSUP) (TC 2.A.102) family.

Its subcellular location is the cell membrane. The chain is Probable membrane transporter protein ORF9 from Sinorhizobium sp.